Here is a 289-residue protein sequence, read N- to C-terminus: uncharacterized protein (289 aa).

In terms of domain architecture, HTH tetR-type spans 2–62 (NEKKERIIKT…SACEYYIGMS (61 aa)). Positions 25-44 (TIQEIASECGISKGAFYLHF) form a DNA-binding region, H-T-H motif.

This is an uncharacterized protein from Bacillus subtilis (strain 168).